A 443-amino-acid chain; its full sequence is Cobyrinate a,c-diamide synthase (443 aa).

Positions 244-435 (KVSVAMDSAF…AHIHFLSNPR (192 aa)) constitute a GATase cobBQ-type domain. Catalysis depends on Cys327, which acts as the Nucleophile.

It belongs to the CobB/CbiA family. The cofactor is Mg(2+).

It catalyses the reaction cob(II)yrinate + 2 L-glutamine + 2 ATP + 2 H2O = cob(II)yrinate a,c diamide + 2 L-glutamate + 2 ADP + 2 phosphate + 2 H(+). The protein operates within cofactor biosynthesis; adenosylcobalamin biosynthesis; cob(II)yrinate a,c-diamide from sirohydrochlorin (anaerobic route): step 10/10. Catalyzes the ATP-dependent amidation of the two carboxylate groups at positions a and c of cobyrinate, using either L-glutamine or ammonia as the nitrogen source. In Thermoplasma acidophilum (strain ATCC 25905 / DSM 1728 / JCM 9062 / NBRC 15155 / AMRC-C165), this protein is Cobyrinate a,c-diamide synthase.